Reading from the N-terminus, the 237-residue chain is 1-(5-phosphoribosyl)-5-[(5-phosphoribosylamino)methylideneamino] imidazole-4-carboxamide isomerase (237 aa).

The Proton acceptor role is filled by Asp-8. Residue Asp-129 is the Proton donor of the active site.

The protein belongs to the HisA/HisF family.

It localises to the cytoplasm. It carries out the reaction 1-(5-phospho-beta-D-ribosyl)-5-[(5-phospho-beta-D-ribosylamino)methylideneamino]imidazole-4-carboxamide = 5-[(5-phospho-1-deoxy-D-ribulos-1-ylimino)methylamino]-1-(5-phospho-beta-D-ribosyl)imidazole-4-carboxamide. It functions in the pathway amino-acid biosynthesis; L-histidine biosynthesis; L-histidine from 5-phospho-alpha-D-ribose 1-diphosphate: step 4/9. The sequence is that of 1-(5-phosphoribosyl)-5-[(5-phosphoribosylamino)methylideneamino] imidazole-4-carboxamide isomerase from Roseiflexus castenholzii (strain DSM 13941 / HLO8).